A 608-amino-acid polypeptide reads, in one-letter code: MGRKQKSKQGIPPTLEENHNSSHKVTENAKKRKHSKEKPQNSRKRQLAEEKKSLFENSDSENEKDLIDADEFEEAETLSDLEHDEEPQTFADEFIDDEAKECEGEEEDSVFDSDEEHEVKPMFSDDSGDEEDLELANMEAMSRKLDEEAELEEKEAEEELHTNIHPEAPTVLPPIDGFTDSQPISTLPQDLSQIQLRIQEIVRVLNDFKNLCEPGRNRSEYVDQLLNDICAYYGYSRFLAEKLFELFSVSEAVEFFEANEMPRPVTIRTNTLKTQRRELAQALINRGVNLEPIGKWSKVGLQVFESQVPIGATPEYLAGHYILQAASSFLPVMALAPQPNERILDMSSAPGGKVTYVAALQKNTGIIFANDSNKARTKALSANIHRLGVRNAIVCNYDGRKFPNEVIGGFDRVLLDAPCSGTGVIYKDQSVKTNKSERDFDTLSHLQRQLLLSAIDSVNADSKTGGFIVYSTCSITVDEDEAVIQYALKKRPNVKLVSTGLEFGREGFTRFREKRFHPSLKLTRRYYPHVHNIDGFFVAKLKKISDKIPTVNVADDMKDGTNNDVEIEKNSTEIDNITFNDEADKEIIEQNRRKWLKSKGYKVAKKKD.

2 disordered regions span residues 1–130 and 145–169; these read MGRK…SGDE and LDEEAELEEKEAEEELHTNIHPEAP. Over residues 16 to 29 the composition is skewed to basic and acidic residues; that stretch reads EENHNSSHKVTENA. A compositionally biased stretch (basic residues) spans 30 to 45; that stretch reads KKRKHSKEKPQNSRKR. 2 positions are modified to phosphoserine: Ser58 and Ser60. Acidic residues-rich tracts occupy residues 68–116 and 147–158; these read DADE…SDEE and EEAELEEKEAEE. S-adenosyl-L-methionine contacts are provided by residues 347–353, Asp371, Asp398, and Asp416; that span reads SSAPGGK. Catalysis depends on Cys473, which acts as the Nucleophile.

It belongs to the class I-like SAM-binding methyltransferase superfamily. RsmB/NOP family.

The protein resides in the nucleus. It localises to the nucleolus. The catalysed reaction is a cytidine in 25S rRNA + S-adenosyl-L-methionine = a 5-methylcytidine in 25S rRNA + S-adenosyl-L-homocysteine + H(+). In terms of biological role, S-adenosyl-L-methionine-dependent methyltransferase that specifically methylates the C(5) position of a cytosine in 25S rRNA. Required for 60S ribosomal subunit synthesis and processing. The chain is 25S rRNA (cytosine-C(5))-methyltransferase nop2 (nop2) from Schizosaccharomyces pombe (strain 972 / ATCC 24843) (Fission yeast).